A 166-amino-acid polypeptide reads, in one-letter code: Small ribosomal subunit protein eS10 (166 aa).

Residues 95–166 (RRQTRPETAR…FGRGRGQQPQ (72 aa)) are disordered. The span at 98–129 (TRPETARPRPKGLEGERPARLARGEGDRDAYR) shows a compositional bias: basic and acidic residues. Residues 143–154 (AGAGAATEFQFR) are compositionally biased toward low complexity. Residues 155–166 (GGFGRGRGQQPQ) show a composition bias toward gly residues.

Belongs to the eukaryotic ribosomal protein eS10 family. Component of the small ribosomal subunit.

The protein localises to the cytoplasm. The protein resides in the nucleus. It localises to the nucleolus. Functionally, component of the 40S ribosomal subunit. The ribosome is a large ribonucleoprotein complex responsible for the synthesis of proteins in the cell. This chain is Small ribosomal subunit protein eS10 (rps10), found in Ictalurus punctatus (Channel catfish).